Here is a 38-residue protein sequence, read N- to C-terminus: Large ribosomal subunit protein bL36 (38 aa).

It belongs to the bacterial ribosomal protein bL36 family.

The polypeptide is Large ribosomal subunit protein bL36 (Synechococcus sp. (strain JA-2-3B'a(2-13)) (Cyanobacteria bacterium Yellowstone B-Prime)).